Here is a 112-residue protein sequence, read N- to C-terminus: UPF0145 protein MmarC6_1828 (112 aa).

The protein belongs to the UPF0145 family.

This Methanococcus maripaludis (strain C6 / ATCC BAA-1332) protein is UPF0145 protein MmarC6_1828.